The primary structure comprises 272 residues: MEMTQSSNHIVVIKLGGSVLDSKDTSLKDIATLKQLGLKPVLIHGGASTVSAWSAKLGLETRLVNGERVTDDATLDVVAAILAGLVNKEIVAALLDMGIKAAGISGVDSATITGQIRATETGYLGDVVQVNTELITALLDANITPVISPVSFHQTNRPSGSRRLLNINGDPVAGEIASALQAERLVFLTDVPAVKGKNGEALGEISADHAAELLASGTASGGMIPKLRSCLKATLAGSSACIIDGRKPHMLIRELTEGNCGTTVTGQHLRRS.

Residues 46 to 47 (GA), R68, and N166 each bind substrate.

It belongs to the acetylglutamate kinase family. ArgB subfamily.

The protein resides in the cytoplasm. It catalyses the reaction N-acetyl-L-glutamate + ATP = N-acetyl-L-glutamyl 5-phosphate + ADP. The protein operates within amino-acid biosynthesis; L-arginine biosynthesis; N(2)-acetyl-L-ornithine from L-glutamate: step 2/4. In terms of biological role, catalyzes the ATP-dependent phosphorylation of N-acetyl-L-glutamate. The sequence is that of Acetylglutamate kinase from Dehalococcoides mccartyi (strain ATCC BAA-2100 / JCM 16839 / KCTC 5957 / BAV1).